A 97-amino-acid chain; its full sequence is HssA/B-like protein 47 (97 aa).

The disordered stretch occupies residues M1 to N33.

The protein belongs to the hssA/B family.

The chain is HssA/B-like protein 47 (hssl47) from Dictyostelium discoideum (Social amoeba).